Consider the following 840-residue polypeptide: Heat shock 70 kDa protein 4 (840 aa).

Position 53 is an N6-acetyllysine (K53). A Phosphoserine modification is found at S76. Y89 and Y336 each carry phosphotyrosine. Residues S393 and S415 each carry the phosphoserine modification. K430 is subject to N6-acetyllysine. Positions 500 to 575 (VHKSEENEEP…QAKKAKVKTS (76 aa)) are disordered. The span at 514–533 (QNAKEEEKMQVDQEEPHVEE) shows a compositional bias: basic and acidic residues. T538 carries the phosphothreonine modification. A phosphoserine mark is found at S546 and S647. Y660 bears the Phosphotyrosine mark. K679 is modified (N6-acetyllysine). Position 756 is a phosphoserine (S756). At K773 the chain carries N6-methyllysine. Residues 783–840 (ISKPKPKVEPPKEEQKNAEQNGPVDGQGDNPGPQAAEQGTDAAVPSDSDKKLPEMDID) are disordered. Basic and acidic residues-rich tracts occupy residues 788 to 799 (PKVEPPKEEQKN) and 829 to 840 (DSDKKLPEMDID).

It belongs to the heat shock protein 70 family. Interacts with TJP1/ZO-1.

It localises to the cytoplasm. The sequence is that of Heat shock 70 kDa protein 4 (HSPA4) from Pongo abelii (Sumatran orangutan).